A 280-amino-acid chain; its full sequence is Adenosylcobinamide-GDP ribazoletransferase (280 aa).

The next 6 membrane-spanning stretches (helical) occupy residues 4 to 24 (YLLA…GISM), 39 to 59 (VVGA…QVIF), 61 to 81 (GPVL…FNHL), 108 to 128 (TIGT…YGSI), 196 to 216 (FLIG…WIGL), and 255 to 275 (TALI…MGGF).

It belongs to the CobS family. Mg(2+) serves as cofactor.

The protein localises to the cell membrane. It carries out the reaction alpha-ribazole + adenosylcob(III)inamide-GDP = adenosylcob(III)alamin + GMP + H(+). The enzyme catalyses alpha-ribazole 5'-phosphate + adenosylcob(III)inamide-GDP = adenosylcob(III)alamin 5'-phosphate + GMP + H(+). It functions in the pathway cofactor biosynthesis; adenosylcobalamin biosynthesis; adenosylcobalamin from cob(II)yrinate a,c-diamide: step 7/7. In terms of biological role, joins adenosylcobinamide-GDP and alpha-ribazole to generate adenosylcobalamin (Ado-cobalamin). Also synthesizes adenosylcobalamin 5'-phosphate from adenosylcobinamide-GDP and alpha-ribazole 5'-phosphate. The polypeptide is Adenosylcobinamide-GDP ribazoletransferase (Methanosarcina barkeri (strain Fusaro / DSM 804)).